Reading from the N-terminus, the 332-residue chain is MTEYDMVVIGGGPVGLYATFYAGLRDMKALLIDAQDELGGQLVTLYPEKMVYDVGGFPGILAYELAQQLVEQAKMFSPDIRIKEWADMIERTQDNMWVVKTDKGNSFKTKTILIAAGIGKMTPSRLGAKGEVEYENKGVYYTVRRKKDFEGKRVLIVGGGDSAVDWALTLAPVAKSVTLIHRRDQFRAHERSVKQLYQVATVYTWHELKEVRGDGNRVTQAVIFDNRTKDEKILDVDAVIISIGFKGDLGNMPKWGVNMKGRDIIVNAKMETNLPGVYAAGDIASQEGAPKLALIAVGFGQAAIAVSVAKKYIDPNASLFAGHSSEMDKFKK.

D33, Q41, Y46, A86, M121, D282, and S325 together coordinate FAD.

It belongs to the ferredoxin--NADP reductase type 2 family. As to quaternary structure, homodimer. The cofactor is FAD.

The catalysed reaction is 2 reduced [2Fe-2S]-[ferredoxin] + NADP(+) + H(+) = 2 oxidized [2Fe-2S]-[ferredoxin] + NADPH. This Sulfurisphaera tokodaii (strain DSM 16993 / JCM 10545 / NBRC 100140 / 7) (Sulfolobus tokodaii) protein is Ferredoxin--NADP reductase.